Consider the following 293-residue polypeptide: Inhibitory synaptic factor 1 (293 aa).

A disordered region spans residues 1–26 (MNIRGAPDLGQPSDDPSSGGERERIR). Residues 30-63 (KMVIGQLEGILRELKEVAKELREVVSQIDKLTSD) adopt a coiled-coil conformation. Disordered regions lie at residues 120 to 186 (TPSD…RERV) and 200 to 293 (DDEE…RGKN). The segment covering 171–180 (VKSQLPQRTP) has biased composition (polar residues). The segment covering 200-215 (DDEEGDGEQEVEEEEV) has biased composition (acidic residues). Composition is skewed to polar residues over residues 243–256 (SPLT…TLAP) and 264–286 (RNSS…TATR).

This sequence belongs to the INSYN1 family. Interacts with GPHN.

It is found in the postsynaptic density. Functionally, component of the protein machinery at the inhibitory synapses, probably acting as a scaffold. Inhibitory synapses dampen neuronal activity through postsynaptic hyperpolarization. This synaptic inhibition is fundamental for the functioning of the central nervous system, shaping and orchestrating the flow of information through neuronal networks to generate a precise neural code. This chain is Inhibitory synaptic factor 1, found in Homo sapiens (Human).